Reading from the N-terminus, the 207-residue chain is Cytochrome bo(3) ubiquinol oxidase subunit 3 (207 aa).

At 1 to 26 (MSSQVMHGAAHGHDHGHDDHHHDSGQ) the chain is on the cytoplasmic side. A helical membrane pass occupies residues 27 to 47 (MTVLGFWLYLMTDCILFASLF). The Periplasmic portion of the chain corresponds to 48–70 (ATYAVLSGSFAGGPSGHDIFQLD). The helical transmembrane segment at 71-91 (FVAVETLFLLLSSITFGFAML) threads the bilayer. The Cytoplasmic segment spans residues 92–99 (KMFDGKKA). Residues 100–120 (GVLGWLAVTFLFGAGFIAMEI) form a helical membrane-spanning segment. Topologically, residues 121-141 (YEFHHLIAEGFGPQRSGFLSG) are periplasmic. Residues 142 to 162 (FFALVGTHGLHVTAGLIWMAI) traverse the membrane as a helical segment. Topologically, residues 163–185 (MMYQINKHGITPTAKTRMSCLSL) are cytoplasmic. Residues 186-206 (FWHFLDVVWICVFTVVYLLGV) form a helical membrane-spanning segment. Leu207 is a topological domain (periplasmic).

It belongs to the cytochrome c oxidase subunit 3 family. Heterooctamer of two A chains, two B chains, two C chains and two D chains.

The protein localises to the cell inner membrane. Cytochrome bo(3) ubiquinol terminal oxidase is the component of the aerobic respiratory chain of E.coli that predominates when cells are grown at high aeration. Has proton pump activity across the membrane in addition to electron transfer, pumping 2 protons/electron. This is Cytochrome bo(3) ubiquinol oxidase subunit 3 (cyoC) from Pseudomonas putida (Arthrobacter siderocapsulatus).